Here is a 512-residue protein sequence, read N- to C-terminus: Sucrose transport protein SUC2 (512 aa).

Topologically, residues 1-31 are cytoplasmic; that stretch reads MVSHPMEKAANGASALETQTGELDQPERLRK. Residues 32–52 form a helical membrane-spanning segment; that stretch reads IISVSSIAAGVQFGWALQLSL. The Extracellular segment spans residues 53-65; sequence LTPYVQLLGIPHK. The chain crosses the membrane as a helical span at residues 66–86; the sequence is WASLIWLCGPISGMLVQPIVG. Residues 87-100 are Cytoplasmic-facing; that stretch reads YHSDRCTSRFGRRR. The chain crosses the membrane as a helical span at residues 101–121; the sequence is PFIVAGAGLVTVAVFLIGYAA. Residues 122–138 lie on the Extracellular side of the membrane; that stretch reads DIGHSMGDQLDKPPKTR. The helical transmembrane segment at 139-159 threads the bilayer; it reads AIAIFALGFWILDVANNTLQG. The Cytoplasmic segment spans residues 160–177; it reads PCRAFLADLSAGNAKKTR. Residues 178–198 form a helical membrane-spanning segment; that stretch reads TANAFFSFFMAVGNVLGYAAG. Residues 199–223 are Extracellular-facing; that stretch reads SYRNLYKVVPFTMTESCDLYCANLK. Residues 224–244 form a helical membrane-spanning segment; sequence TCFFLSITLLLIVTFVSLCYV. At 245–278 the chain is on the cytoplasmic side; the sequence is KEKPWTPEPTADGKASNVPFFGEIFGAFKELKRP. A helical transmembrane segment spans residues 279–299; the sequence is MWMLLIVTALNWIAWFPFLLF. Residues 300–332 lie on the Extracellular side of the membrane; it reads DTDWMGREVYGGNSDATATAASKKLYNDGVRAG. Residues 333 to 353 form a helical membrane-spanning segment; sequence ALGLMLNAIVLGFMSLGVEWI. The Cytoplasmic portion of the chain corresponds to 354 to 362; the sequence is GRKLGGAKR. Residues 363 to 383 traverse the membrane as a helical segment; sequence LWGIVNFILAICLAMTVVVTK. Residues 384–407 lie on the Extracellular side of the membrane; that stretch reads QAENHRRDHGGAKTGPPGNVTAGA. An N-linked (GlcNAc...) asparagine glycan is attached at asparagine 402. The chain crosses the membrane as a helical span at residues 408–428; that stretch reads LTLFAILGIPQAITFSIPFAL. The Cytoplasmic portion of the chain corresponds to 429-440; the sequence is ASIFSTNSGAGQ. Residues 441–461 traverse the membrane as a helical segment; it reads GLSLGVLNLAIVVPQMVISVG. The Extracellular segment spans residues 462–473; that stretch reads GGPFDELFGGGN. The chain crosses the membrane as a helical span at residues 474 to 494; the sequence is IPAFVLGAIAAAVSGVLALTV. Residues 495 to 512 are Cytoplasmic-facing; the sequence is LPSPPPDAPAFKATMGFH.

It belongs to the glycoside-pentoside-hexuronide (GPH) cation symporter transporter (TC 2.A.2.4) family. As to quaternary structure, homodimer. Interacts with SUC3 and SUC4. As to expression, expressed in leaves and, to a lower extent, in roots, flowers and stems. Highly specific to the phloem, exclusively localized in companion cells (at protein level).

The protein resides in the cell membrane. The enzyme catalyses sucrose(out) + H(+)(out) = sucrose(in) + H(+)(in). Its pathway is glycan biosynthesis; sucrose metabolism. With respect to regulation, inhibited by protonophores (e.g. dinitrophenol and carbonyl cyanide m-chlorophenyl-hydrazone (CCCP)) and SH group inhibitors (e.g. N-ethylmaleimide (NEM) and p-chloromercuriphenyl sulphonic acid (PCMPS)). Responsible for the transport of sucrose into the cell, with the concomitant uptake of protons (symport system). Can also transport other glucosides such as maltose, arbutin (hydroquinone-beta-D-glucoside), salicin (2-(hydroxymethyl)phenyl-beta-D-glucoside), alpha-phenylglucoside, beta-phenylglucoside, alpha-paranitrophenylglucoside, beta-paranitrophenylglucoside, and paranitrophenyl-beta-thioglucoside. May also transport biotin. Required for apoplastic phloem sucrose loading in source tissues (e.g. leaves) in order to transport it to sink tissues (e.g. roots, flowers). In Arabidopsis thaliana (Mouse-ear cress), this protein is Sucrose transport protein SUC2.